Reading from the N-terminus, the 482-residue chain is Cardiolipin synthase (482 aa).

2 helical membrane-spanning segments follow: residues 4–24 and 34–54; these read LAYLLVILLILNVFFAAVTVF and WAWLLVLTFVPIFGFIIYLIF. 2 PLD phosphodiesterase domains span residues 217–244 and 395–422; these read LNYRNHRKLAIIDGDVGYIGGFNIGDEY and DNGFIHAKTLVVDGEIASVGTANMDFRS. Residues H222, K224, D229, H400, K402, and D407 contribute to the active site.

It belongs to the phospholipase D family. Cardiolipin synthase subfamily.

Its subcellular location is the cell membrane. The enzyme catalyses 2 a 1,2-diacyl-sn-glycero-3-phospho-(1'-sn-glycerol) = a cardiolipin + glycerol. Its function is as follows. Catalyzes the reversible phosphatidyl group transfer from one phosphatidylglycerol molecule to another to form cardiolipin (CL) (diphosphatidylglycerol) and glycerol. This chain is Cardiolipin synthase (cls), found in Listeria monocytogenes serotype 4b (strain CLIP80459).